The primary structure comprises 174 residues: tRNA (cytidine(56)-2'-O)-methyltransferase (174 aa).

S-adenosyl-L-methionine is bound by residues leucine 83, 108–112 (GAEKV), and 126–133 (VGNQPHSE).

Belongs to the aTrm56 family. In terms of assembly, homodimer.

Its subcellular location is the cytoplasm. The enzyme catalyses cytidine(56) in tRNA + S-adenosyl-L-methionine = 2'-O-methylcytidine(56) in tRNA + S-adenosyl-L-homocysteine + H(+). In terms of biological role, specifically catalyzes the AdoMet-dependent 2'-O-ribose methylation of cytidine at position 56 in tRNAs. The chain is tRNA (cytidine(56)-2'-O)-methyltransferase from Methanothrix thermoacetophila (strain DSM 6194 / JCM 14653 / NBRC 101360 / PT) (Methanosaeta thermophila).